Consider the following 290-residue polypeptide: Ribosomal RNA small subunit methyltransferase A (290 aa).

S-adenosyl-L-methionine-binding residues include Asn-27, Leu-29, Gly-54, Glu-75, Asp-100, and Asn-125.

Belongs to the class I-like SAM-binding methyltransferase superfamily. rRNA adenine N(6)-methyltransferase family. RsmA subfamily.

The protein localises to the cytoplasm. It carries out the reaction adenosine(1518)/adenosine(1519) in 16S rRNA + 4 S-adenosyl-L-methionine = N(6)-dimethyladenosine(1518)/N(6)-dimethyladenosine(1519) in 16S rRNA + 4 S-adenosyl-L-homocysteine + 4 H(+). In terms of biological role, specifically dimethylates two adjacent adenosines (A1518 and A1519) in the loop of a conserved hairpin near the 3'-end of 16S rRNA in the 30S particle. May play a critical role in biogenesis of 30S subunits. The polypeptide is Ribosomal RNA small subunit methyltransferase A (Streptococcus thermophilus (strain ATCC BAA-250 / LMG 18311)).